The chain runs to 91 residues: Probable Fe(2+)-trafficking protein (91 aa).

Belongs to the Fe(2+)-trafficking protein family.

Its function is as follows. Could be a mediator in iron transactions between iron acquisition and iron-requiring processes, such as synthesis and/or repair of Fe-S clusters in biosynthetic enzymes. The chain is Probable Fe(2+)-trafficking protein from Cupriavidus metallidurans (strain ATCC 43123 / DSM 2839 / NBRC 102507 / CH34) (Ralstonia metallidurans).